Reading from the N-terminus, the 170-residue chain is RNA pyrophosphohydrolase (170 aa).

Positions proline 9–alanine 162 constitute a Nudix hydrolase domain. Residues glycine 50 to glycine 71 carry the Nudix box motif.

The protein belongs to the Nudix hydrolase family. RppH subfamily. A divalent metal cation serves as cofactor.

Functionally, accelerates the degradation of transcripts by removing pyrophosphate from the 5'-end of triphosphorylated RNA, leading to a more labile monophosphorylated state that can stimulate subsequent ribonuclease cleavage. The sequence is that of RNA pyrophosphohydrolase from Agrobacterium fabrum (strain C58 / ATCC 33970) (Agrobacterium tumefaciens (strain C58)).